A 500-amino-acid chain; its full sequence is MLKRKKIKPITLGDVTIIDDGKLRKAITAASLGNAMEWFDFGVYGFVAYALGKVFFPGADPSVQMIAALATFSVPFLIRPLGGLFFGMLGDKYGRQKILAITIVIMSISTFCIGLIPSYATIGIWAPILLLLCKMAQGFSVGGEYTGASIFVAEYSPDRKRGFMGSWLDFGSIAGFVLGAGVVVLISTIVGEENFLEWGWRIPFFIALPLGIIGLYLRHALEETPAFQQHVDKLEQGDREGLQDGPKVSFKEIATKHWRSLLSCIGLVIATNVTYYMLLTYMPSYLSHNLHYSEDHGVLIIIAIMIGMLFVQPVMGLLSDRFGRRPFVIMGSIALFALAIPAFILINSNVIGLIFAGLLMLAVILNCFTGVMASTLPAMFPTHIRYSALAAAFNISVLIAGLTPTLAAWLVESSQDLMMPAYYLMVIAVIGLITGISMKETANRPLKGATPAASDIQEAKEILGEHYDNIEQKIDDIDQEIAELQVKRSRLVQQHPRIDE.

The Cytoplasmic segment spans residues 1–37 (MLKRKKIKPITLGDVTIIDDGKLRKAITAASLGNAME). Residues 38–58 (WFDFGVYGFVAYALGKVFFPG) traverse the membrane as a helical segment. The Periplasmic portion of the chain corresponds to 59 to 65 (ADPSVQM). The helical transmembrane segment at 66-86 (IAALATFSVPFLIRPLGGLFF) threads the bilayer. Topologically, residues 87 to 97 (GMLGDKYGRQK) are cytoplasmic. Residues 98–118 (ILAITIVIMSISTFCIGLIPS) traverse the membrane as a helical segment. Topologically, residues 119–121 (YAT) are periplasmic. The chain crosses the membrane as a helical span at residues 122-142 (IGIWAPILLLLCKMAQGFSVG). Over 143-169 (GEYTGASIFVAEYSPDRKRGFMGSWLD) the chain is Cytoplasmic. A helical transmembrane segment spans residues 170–190 (FGSIAGFVLGAGVVVLISTIV). The Periplasmic segment spans residues 191–194 (GEEN). Residues 195-215 (FLEWGWRIPFFIALPLGIIGL) traverse the membrane as a helical segment. Residues 216–260 (YLRHALEETPAFQQHVDKLEQGDREGLQDGPKVSFKEIATKHWRS) lie on the Cytoplasmic side of the membrane. A helical membrane pass occupies residues 261–281 (LLSCIGLVIATNVTYYMLLTY). Topologically, residues 282 to 297 (MPSYLSHNLHYSEDHG) are periplasmic. The helical transmembrane segment at 298–318 (VLIIIAIMIGMLFVQPVMGLL) threads the bilayer. Residues 319 to 325 (SDRFGRR) are Cytoplasmic-facing. The chain crosses the membrane as a helical span at residues 326 to 346 (PFVIMGSIALFALAIPAFILI). The Periplasmic portion of the chain corresponds to 347 to 350 (NSNV). The chain crosses the membrane as a helical span at residues 351–371 (IGLIFAGLLMLAVILNCFTGV). Residues 372–390 (MASTLPAMFPTHIRYSALA) lie on the Cytoplasmic side of the membrane. The helical transmembrane segment at 391–411 (AAFNISVLIAGLTPTLAAWLV) threads the bilayer. The Periplasmic segment spans residues 412-416 (ESSQD). A helical transmembrane segment spans residues 417–437 (LMMPAYYLMVIAVIGLITGIS). Topologically, residues 438–500 (MKETANRPLK…LVQQHPRIDE (63 aa)) are cytoplasmic. Residues 453–498 (ASDIQEAKEILGEHYDNIEQKIDDIDQEIAELQVKRSRLVQQHPRI) adopt a coiled-coil conformation.

This sequence belongs to the major facilitator superfamily. Metabolite:H+ Symporter (MHS) family (TC 2.A.1.6) family.

It localises to the cell inner membrane. In terms of biological role, proton symporter that senses osmotic shifts and responds by importing osmolytes such as proline, glycine betaine, stachydrine, pipecolic acid, ectoine and taurine. It is both an osmosensor and an osmoregulator which is available to participate early in the bacterial osmoregulatory response. This Salmonella typhimurium (strain LT2 / SGSC1412 / ATCC 700720) protein is Proline/betaine transporter (proP).